A 38-amino-acid polypeptide reads, in one-letter code: Photosystem I reaction center subunit IX (38 aa).

Residues 6–26 (YLSTAPVVATLWLFLTAGILI) traverse the membrane as a helical segment.

Belongs to the PsaJ family.

It localises to the plastid. The protein resides in the chloroplast thylakoid membrane. May help in the organization of the PsaE and PsaF subunits. The chain is Photosystem I reaction center subunit IX from Cyanidioschyzon merolae (strain NIES-3377 / 10D) (Unicellular red alga).